The chain runs to 316 residues: Ribose-phosphate pyrophosphokinase (316 aa).

Residues 40-42 (DGE) and 99-100 (RQ) each bind ATP. Residues His133 and Asp174 each coordinate Mg(2+). The active site involves Lys197. D-ribose 5-phosphate-binding positions include Arg199, Asp223, and 227 to 231 (DTAGT).

It belongs to the ribose-phosphate pyrophosphokinase family. Class I subfamily. Homohexamer. The cofactor is Mg(2+).

Its subcellular location is the cytoplasm. It catalyses the reaction D-ribose 5-phosphate + ATP = 5-phospho-alpha-D-ribose 1-diphosphate + AMP + H(+). Its pathway is metabolic intermediate biosynthesis; 5-phospho-alpha-D-ribose 1-diphosphate biosynthesis; 5-phospho-alpha-D-ribose 1-diphosphate from D-ribose 5-phosphate (route I): step 1/1. In terms of biological role, involved in the biosynthesis of the central metabolite phospho-alpha-D-ribosyl-1-pyrophosphate (PRPP) via the transfer of pyrophosphoryl group from ATP to 1-hydroxyl of ribose-5-phosphate (Rib-5-P). This is Ribose-phosphate pyrophosphokinase from Fusobacterium nucleatum subsp. nucleatum (strain ATCC 25586 / DSM 15643 / BCRC 10681 / CIP 101130 / JCM 8532 / KCTC 2640 / LMG 13131 / VPI 4355).